The chain runs to 585 residues: 3-hydroxy-3-methylglutaryl-coenzyme A reductase 1 (585 aa).

2 consecutive transmembrane segments (helical) span residues 38–58 and 77–97; these read LYLT…FLLC and EIVA…FFGI. Residues 98 to 169 form a linker region; that stretch reads DFVQSLVLRP…DEMPVTVMTE (72 aa). The segment at 170-585 is catalytic; it reads EDEEIIRSVV…SSKDVSKVSS (416 aa). Glu-264 (charge relay system) is an active-site residue. The N-linked (GlcNAc...) asparagine glycan is linked to Asn-328. The Charge relay system role is filled by Lys-396. N-linked (GlcNAc...) asparagine glycosylation is present at Asn-441. The active-site Charge relay system is the Asp-472. His-570 serves as the catalytic Proton donor. Residue Asn-574 is glycosylated (N-linked (GlcNAc...) asparagine).

The protein belongs to the HMG-CoA reductase family.

It is found in the endoplasmic reticulum membrane. Its subcellular location is the mitochondrion membrane. The protein localises to the plastid membrane. The enzyme catalyses (R)-mevalonate + 2 NADP(+) + CoA = (3S)-3-hydroxy-3-methylglutaryl-CoA + 2 NADPH + 2 H(+). Its pathway is metabolic intermediate biosynthesis; (R)-mevalonate biosynthesis; (R)-mevalonate from acetyl-CoA: step 3/3. Functionally, catalyzes the synthesis of mevalonate. The specific precursor of all isoprenoid compounds present in plants. The polypeptide is 3-hydroxy-3-methylglutaryl-coenzyme A reductase 1 (HMG1) (Gossypium hirsutum (Upland cotton)).